The primary structure comprises 200 residues: NADH-quinone oxidoreductase subunit C (200 aa).

It belongs to the complex I 30 kDa subunit family. As to quaternary structure, NDH-1 is composed of 14 different subunits. Subunits NuoB, C, D, E, F, and G constitute the peripheral sector of the complex.

It is found in the cell inner membrane. It carries out the reaction a quinone + NADH + 5 H(+)(in) = a quinol + NAD(+) + 4 H(+)(out). NDH-1 shuttles electrons from NADH, via FMN and iron-sulfur (Fe-S) centers, to quinones in the respiratory chain. The immediate electron acceptor for the enzyme in this species is believed to be ubiquinone. Couples the redox reaction to proton translocation (for every two electrons transferred, four hydrogen ions are translocated across the cytoplasmic membrane), and thus conserves the redox energy in a proton gradient. This is NADH-quinone oxidoreductase subunit C from Ruegeria pomeroyi (strain ATCC 700808 / DSM 15171 / DSS-3) (Silicibacter pomeroyi).